The primary structure comprises 399 residues: S-adenosylmethionine synthase (399 aa).

H17 is an ATP binding site. Residue D19 participates in Mg(2+) binding. Residue E45 participates in K(+) binding. E58 and Q101 together coordinate L-methionine. A flexible loop region spans residues 101 to 111 (QSPDIAQGVDE). Residues 177-179 (DAK), 244-245 (RF), D253, 259-260 (RK), A276, and K280 each bind ATP. D253 is an L-methionine binding site. K284 is a binding site for L-methionine.

This sequence belongs to the AdoMet synthase family. In terms of assembly, homotetramer; dimer of dimers. Mg(2+) serves as cofactor. Requires K(+) as cofactor.

Its subcellular location is the cytoplasm. It carries out the reaction L-methionine + ATP + H2O = S-adenosyl-L-methionine + phosphate + diphosphate. The protein operates within amino-acid biosynthesis; S-adenosyl-L-methionine biosynthesis; S-adenosyl-L-methionine from L-methionine: step 1/1. Its function is as follows. Catalyzes the formation of S-adenosylmethionine (AdoMet) from methionine and ATP. The overall synthetic reaction is composed of two sequential steps, AdoMet formation and the subsequent tripolyphosphate hydrolysis which occurs prior to release of AdoMet from the enzyme. This chain is S-adenosylmethionine synthase, found in Listeria monocytogenes serotype 4b (strain CLIP80459).